The chain runs to 223 residues: MSKQIPTPYMWSYQPQSGRAAGASVDYSTRMNWLSAGPSMIGQVNDIRHTRNQILIRQALITETPRPVQNPPSWPASLLPQMTQPPTHLHLPRNEILEGRLTDAGMQLAGGGALAPRDLYALTLRGRGIQLNEDLPLSASTLRPDGIFQLGGGGRSSFNPTDAYLTLQNSSSLPRSGGIGSEQFVREFVPTVYINPFSGPPGTYPDQFIANYNILTDSVAGYD.

Thr64 carries the post-translational modification Phosphothreonine; by host. Positions 112–153 (GALAPRDLYALTLRGRGIQLNEDLPLSASTLRPDGIFQLGGG) are excised as a propeptide. Ser170 is modified (phosphoserine; by host).

It belongs to the adenoviridae hexon-linking protein family. Interacts with the peripentonal hexons as well as the hexons in the facets. Part of a complex composed of the core-capsid bridging protein, the endosome lysis protein VI and the hexon-linking protein VIII; these interactions bridge the virus core to the capsid. In terms of processing, cleaved by the viral protease during virion maturation. May cause the middle segment to be shed from the capsid.

The protein resides in the virion. The protein localises to the host nucleus. In terms of biological role, structural component of the virion that acts as a cement protein on the capsid interior and which glue the peripentonal hexons and group-of-nine hexons together. In Porcine adenovirus A serotype 3 (PAdV-3), this protein is Pre-hexon-linking protein VIII.